The sequence spans 162 residues: Eukaryotic translation initiation factor 5 (162 aa).

Residues 59–162 form a disordered region; sequence PPNLNPAVQG…EKDRMDIFYE (104 aa). The segment covering 85–109 has biased composition (polar residues); sequence GDTNGDTSQVDDQNESLEASVNENS. The span at 148-162 shows a compositional bias: basic and acidic residues; it reads DLEKREKDRMDIFYE.

Belongs to the eIF-2-beta/eIF-5 family.

In terms of biological role, catalyzes the hydrolysis of GTP bound to the 40S ribosomal initiation complex (40S.mRNA.Met-tRNA[F].eIF-2.GTP) with the subsequent joining of a 60S ribosomal subunit resulting in the release of eIF-2 and the guanine nucleotide. The subsequent joining of a 60S ribosomal subunit results in the formation of a functional 80S initiation complex (80S.mRNA.Met-tRNA[F]). This Tribolium castaneum (Red flour beetle) protein is Eukaryotic translation initiation factor 5.